The following is a 531-amino-acid chain: Probable inactive beta-glucosidase 25 (531 aa).

Positions 1–24 (MALKAILFLGLFLVVIVSPITVYG) are cleaved as a signal peptide. A beta-D-glucoside-binding positions include glutamine 53 and 202–203 (NE). Residue glutamate 203 is the Proton donor of the active site. A disulfide bridge links cysteine 222 with cysteine 230. A beta-D-glucoside-binding positions include phenylalanine 348 and 477-478 (EW).

This sequence belongs to the glycosyl hydrolase 1 family.

The chain is Probable inactive beta-glucosidase 25 from Arabidopsis thaliana (Mouse-ear cress).